Consider the following 257-residue polypeptide: Fructose-2,6-bisphosphatase TIGAR B (257 aa).

H11 acts as the Tele-phosphohistidine intermediate in catalysis. Catalysis depends on E89, which acts as the Proton donor/acceptor.

It belongs to the phosphoglycerate mutase family.

It is found in the cytoplasm. The protein localises to the nucleus. The protein resides in the mitochondrion. It catalyses the reaction beta-D-fructose 2,6-bisphosphate + H2O = beta-D-fructose 6-phosphate + phosphate. In terms of biological role, fructose-bisphosphatase hydrolyzing fructose-2,6-bisphosphate as well as fructose-1,6-bisphosphate. Acts as a negative regulator of glycolysis by lowering intracellular levels of fructose-2,6-bisphosphate in a p53/TP53-dependent manner, resulting in the pentose phosphate pathway (PPP) activation and NADPH production. Contributes to the generation of reduced glutathione to cause a decrease in intracellular reactive oxygen species (ROS) content, correlating with its ability to protect cells from oxidative or metabolic stress-induced cell death. May play a role in mitophagy inhibition. The sequence is that of Fructose-2,6-bisphosphatase TIGAR B from Danio rerio (Zebrafish).